Consider the following 239-residue polypeptide: RNA chaperone ProQ (239 aa).

The disordered stretch occupies residues 107 to 177 (KARVQAQRAE…RKPVAKPVQA (71 aa)). Positions 115–137 (AEQRAKKREAENVAAGEKNERPT) are enriched in basic and acidic residues.

The protein belongs to the ProQ family.

It localises to the cytoplasm. Its function is as follows. RNA chaperone with significant RNA binding, RNA strand exchange and RNA duplexing activities. May regulate ProP activity through an RNA-based, post-transcriptional mechanism. This chain is RNA chaperone ProQ, found in Photorhabdus laumondii subsp. laumondii (strain DSM 15139 / CIP 105565 / TT01) (Photorhabdus luminescens subsp. laumondii).